The chain runs to 122 residues: Early nodulin-10 (122 aa).

An N-terminal signal peptide occupies residues 1-36 (MTCTLKSPPKMASFFLSSLVLMFIAALILLPQGLAA). 10 consecutive repeat copies span residues 45-49 (PPDSE), 51-55 (PPYRN), 58-62 (PPFAL), 68-72 (APIYK), 77-81 (PPIYN), 82-86 (PPIYE), 88-92 (PPTYK), 99-103 (PPPFQ), 106-110 (PPFYK), and 113-117 (PPSQK). A 10 X 5 AA approximate repeats of P-P-X-X-X region spans residues 45–117 (PPDSELPPYR…FYKQAPPSQK (73 aa)). Residues 90 to 122 (TYKPSKKRLPPPFQKLPPFYKQAPPSQKLPRVN) form a disordered region.

In terms of tissue distribution, root nodules. In early nodules, expressed only in the interior of the developing nodule with no expression in other nodule tissues, including meristem. In slightly older nodules, expressed in almost all cells of the central zone. In more mature nodules, expression is restricted to the invasion zone.

The protein is Early nodulin-10 (ENOD10) of Medicago sativa (Alfalfa).